The primary structure comprises 376 residues: Succinyl-diaminopimelate desuccinylase (376 aa).

Residue His74 coordinates Zn(2+). The active site involves Asp76. Residue Asp105 participates in Zn(2+) binding. Glu135 (proton acceptor) is an active-site residue. Zn(2+) is bound by residues Glu136, Glu164, and His349.

The protein belongs to the peptidase M20A family. DapE subfamily. As to quaternary structure, homodimer. It depends on Zn(2+) as a cofactor. Requires Co(2+) as cofactor.

The enzyme catalyses N-succinyl-(2S,6S)-2,6-diaminopimelate + H2O = (2S,6S)-2,6-diaminopimelate + succinate. It participates in amino-acid biosynthesis; L-lysine biosynthesis via DAP pathway; LL-2,6-diaminopimelate from (S)-tetrahydrodipicolinate (succinylase route): step 3/3. Its function is as follows. Catalyzes the hydrolysis of N-succinyl-L,L-diaminopimelic acid (SDAP), forming succinate and LL-2,6-diaminopimelate (DAP), an intermediate involved in the bacterial biosynthesis of lysine and meso-diaminopimelic acid, an essential component of bacterial cell walls. The protein is Succinyl-diaminopimelate desuccinylase of Zymomonas mobilis subsp. mobilis (strain ATCC 31821 / ZM4 / CP4).